The following is a 20-amino-acid chain: Antifungal protein (20 aa).

The protein belongs to the protease inhibitor I3 (leguminous Kunitz-type inhibitor) family.

Functionally, inhibits soybean trypsin. Has antifungal activity against R.cerealis, A.brassicae and A.niger, and weak antifungal activity against F.oxysporum. The polypeptide is Antifungal protein (Cullen corylifolium (Malaysian scurfpea)).